We begin with the raw amino-acid sequence, 244 residues long: uncharacterized protein (244 aa).

2 consecutive transmembrane segments (helical) span residues 29-49 and 139-159; these read WIPW…TQHM and LGMK…ATVI.

This sequence belongs to the FMP10 family.

Its subcellular location is the mitochondrion membrane. This is an uncharacterized protein from Saccharomyces cerevisiae (strain ATCC 204508 / S288c) (Baker's yeast).